A 55-amino-acid polypeptide reads, in one-letter code: Large ribosomal subunit protein bL33 (55 aa).

This sequence belongs to the bacterial ribosomal protein bL33 family.

This is Large ribosomal subunit protein bL33 from Yersinia pestis (strain Pestoides F).